A 323-amino-acid polypeptide reads, in one-letter code: Arginase (323 aa).

Residues His-119, Asp-142, His-144, and Asp-146 each contribute to the Mn(2+) site. Substrate-binding positions include 144–148 (HADIN), 155–157 (SKN), and Asp-198. Mn(2+) is bound by residues Asp-247 and Asp-249. Substrate is bound by residues Thr-261 and Glu-292.

The protein belongs to the arginase family. As to quaternary structure, homotrimer. It depends on Mn(2+) as a cofactor.

The enzyme catalyses L-arginine + H2O = urea + L-ornithine. It functions in the pathway nitrogen metabolism; urea cycle; L-ornithine and urea from L-arginine: step 1/1. The chain is Arginase (car1) from Schizosaccharomyces pombe (strain 972 / ATCC 24843) (Fission yeast).